A 363-amino-acid chain; its full sequence is Carbamoyl phosphate synthase small chain (363 aa).

The interval 1–172 is CPSase; that stretch reads MTKRILMLED…AFASPGDGKR (172 aa). Ser46, Gly220, and Gly222 together coordinate L-glutamine. Positions 172 to 359 constitute a Glutamine amidotransferase type-1 domain; sequence RVVLVDYGVK…MEMMNGKEEG (188 aa). Cys247 (nucleophile) is an active-site residue. L-glutamine is bound by residues Leu248, Gln251, Asn289, Gly291, and Tyr292. Residues His332 and Glu334 contribute to the active site.

The protein belongs to the CarA family. As to quaternary structure, composed of two chains; the small (or glutamine) chain promotes the hydrolysis of glutamine to ammonia, which is used by the large (or ammonia) chain to synthesize carbamoyl phosphate. Tetramer of heterodimers (alpha,beta)4.

It carries out the reaction hydrogencarbonate + L-glutamine + 2 ATP + H2O = carbamoyl phosphate + L-glutamate + 2 ADP + phosphate + 2 H(+). It catalyses the reaction L-glutamine + H2O = L-glutamate + NH4(+). It participates in amino-acid biosynthesis; L-arginine biosynthesis; carbamoyl phosphate from bicarbonate: step 1/1. It functions in the pathway pyrimidine metabolism; UMP biosynthesis via de novo pathway; (S)-dihydroorotate from bicarbonate: step 1/3. Functionally, small subunit of the glutamine-dependent carbamoyl phosphate synthetase (CPSase). CPSase catalyzes the formation of carbamoyl phosphate from the ammonia moiety of glutamine, carbonate, and phosphate donated by ATP, constituting the first step of 2 biosynthetic pathways, one leading to arginine and/or urea and the other to pyrimidine nucleotides. The small subunit (glutamine amidotransferase) binds and cleaves glutamine to supply the large subunit with the substrate ammonia. The protein is Carbamoyl phosphate synthase small chain of Listeria monocytogenes serovar 1/2a (strain ATCC BAA-679 / EGD-e).